A 509-amino-acid chain; its full sequence is Phosphoprotein (509 aa).

3 disordered regions span residues 33–84, 131–236, and 256–281; these read LESW…LGFR, VQAN…DGNS, and PESRWESSERNASVGSVPKSARSAKT. The span at 44-65 shows a compositional bias: polar residues; it reads GRATPNPDTSEGDHQNINQSCS. Residues 146–157 show a composition bias toward acidic residues; it reads DGSDDSDVDSGP. Position 151 is a phosphoserine (Ser-151). A compositionally biased stretch (basic and acidic residues) spans 178 to 187; that stretch reads RSTDVEKLEG. Over residues 221 to 236 the composition is skewed to polar residues; the sequence is SRPSAQSIKKGTDGNS. The multimerization stretch occupies residues 303–376; the sequence is SEFEYEDDLF…LSSIMIAIPG (74 aa). An interaction with the nucleocapsid (N-RNA) region spans residues 459–509; that stretch reads SSRSVIRSIIKSSKLNIDHKDYLLDLLNDVKGSKDLKEFHKMLTAILAKQP.

The protein belongs to the morbillivirus P protein family. Homotetramer. Interacts (via multimerization domain) with polymerase L; this interaction forms the polymerase L-P complex. Interacts (via N-terminus) with N0 (via Ncore); this interaction allows P to chaperon N0 to avoid N polymerization before encapsidation. Interacts (via C-terminus) with N-RNA template; this interaction positions the polymerase on the template for both transcription and replication. Interacts with host ISG15; this interaction disrupts the activity of the N0-P complex. Post-translationally, phosphorylation on serines by host CK2 is necessary for the formation of viral factories.

Functionally, essential cofactor of the RNA polymerase L that plays a central role in the transcription and replication by forming the polymerase complex with RNA polymerase L and recruiting L to the genomic N-RNA template for RNA synthesis. Also plays a central role in the encapsidation of nascent RNA chains by forming the encapsidation complex with the nucleocapsid protein N (N-P complex). Acts as a chaperone for newly synthesized free N protein, so-called N0, allowing encapsidation of nascent RNA chains during replication. The nucleoprotein protein N prevents excessive phosphorylation of P, which leads to down-regulation of viral transcription/ replication. Participates, together with N, in the formation of viral factories (viroplasms), which are large inclusions in the host cytoplasm where replication takes place. This is Phosphoprotein (P/V) from Capra hircus (Goat).